The following is a 439-amino-acid chain: Cln5-like protein 3 (439 aa).

An N-terminal signal peptide occupies residues 1–24 (MKNMLNIILTLTIIFIGLIKISIS). N-linked (GlcNAc...) asparagine glycans are attached at residues asparagine 93, asparagine 112, asparagine 122, asparagine 138, asparagine 168, asparagine 219, asparagine 268, asparagine 289, asparagine 304, and asparagine 359. Residues 371–391 (IIFISIAIGFGVVIILYISIG) form a helical membrane-spanning segment.

Belongs to the CLN5 family.

It is found in the membrane. The polypeptide is Cln5-like protein 3 (cln5lc) (Dictyostelium discoideum (Social amoeba)).